The following is a 398-amino-acid chain: MNKKWQWLVYGWKLIILTLLTAAVFSYAMFQGGFVSWFLFYAFLPFVLYAGLLALYPLRSFQASRQMDKTQLHAGDRLGVTVTLRRKLPFPLMYMVIEDCLPEGIESLNRDGAAAKRLVFPWFKRSMTMSYELARVPRGEHHFHSVRVRTGDVLGLIEKTAFFELDDTLFVYPFYQRFSYQVNERHQEDGVSGSSPIHQHHSSVAASVRNYQPGDRFAALDWKTSARRSQLMTKEFEPSRSKNLFLLMDRFSSDAFEEVVSVTASILHSVLKNGAGAGLASIGKEKNIFPIQEGDQHFKHMLRHLAIAHCDAADPISRYAREELGKPSVRQADQVVVTGQLTEDMLHLAEIGGGRVTVILAKEKDAELSQAENVMIERMMKRQIRVRIMRGGRVSRVV.

This is an uncharacterized protein from Bacillus subtilis (strain 168).